The primary structure comprises 397 residues: Elongation factor Tu (397 aa).

Residues 10 to 207 (KPHVNIGTIG…ACDSYIEEPE (198 aa)) enclose the tr-type G domain. Residues 19-26 (GHIDHGKT) form a G1 region. A GTP-binding site is contributed by 19-26 (GHIDHGKT). A Mg(2+)-binding site is contributed by T26. The tract at residues 60–64 (GITIA) is G2. A G3 region spans residues 81–84 (DCPG). GTP-binding positions include 81–85 (DCPGH) and 136–139 (NKCD). Positions 136-139 (NKCD) are G4. A G5 region spans residues 174–176 (SAL).

It belongs to the TRAFAC class translation factor GTPase superfamily. Classic translation factor GTPase family. EF-Tu/EF-1A subfamily. In terms of assembly, monomer.

The protein resides in the cytoplasm. The catalysed reaction is GTP + H2O = GDP + phosphate + H(+). Its function is as follows. GTP hydrolase that promotes the GTP-dependent binding of aminoacyl-tRNA to the A-site of ribosomes during protein biosynthesis. In Maridesulfovibrio salexigens (strain ATCC 14822 / DSM 2638 / NCIMB 8403 / VKM B-1763) (Desulfovibrio salexigens), this protein is Elongation factor Tu.